The following is a 233-amino-acid chain: Ribonuclease 3 (233 aa).

The RNase III domain maps to 5-127 (LERLCRKLGY…VIGAVYLDGG (123 aa)). Glu40 serves as a coordination point for Mg(2+). Residue Asp44 is part of the active site. Asp113 and Glu116 together coordinate Mg(2+). Glu116 is a catalytic residue. In terms of domain architecture, DRBM spans 156–226 (DPKTRLQEYL…ATRALALLLA (71 aa)).

The protein belongs to the ribonuclease III family. As to quaternary structure, homodimer. Requires Mg(2+) as cofactor.

It is found in the cytoplasm. It carries out the reaction Endonucleolytic cleavage to 5'-phosphomonoester.. Digests double-stranded RNA. Involved in the processing of primary rRNA transcript to yield the immediate precursors to the large and small rRNAs (23S and 16S). Processes some mRNAs, and tRNAs when they are encoded in the rRNA operon. Processes pre-crRNA and tracrRNA of type II CRISPR loci if present in the organism. This Nitrosococcus oceani (strain ATCC 19707 / BCRC 17464 / JCM 30415 / NCIMB 11848 / C-107) protein is Ribonuclease 3.